We begin with the raw amino-acid sequence, 209 residues long: MSQQVGNSIRRKLVIVGDGACGKTCLLIVFSKGQFPEVYVPTVFENYVADVEVDGRRVELALWDTAGQEDYDRLRPLSYPDSNVVLICFSIDLPDSLENVQEKWIAEVLHFCQGVPIILVGCKVDLRNDPQTIEQLRQEGQQPVTSQEGQSVADQIGATGYYECSAKTGYGVREVFEAATRASLMGKSKTNGKAKKNTTEKKKKKCVLL.

S2 bears the N-acetylserine mark. Residue 17–24 participates in GTP binding; the sequence is GDGACGKT. The Effector region signature appears at 39–47; it reads YVPTVFENY. GTP-binding positions include 64–68 and 122–125; these read DTAGQ and CKVD. Residues 187–209 are disordered; that stretch reads KSKTNGKAKKNTTEKKKKKCVLL. The segment covering 190–209 has biased composition (basic residues); sequence TNGKAKKNTTEKKKKKCVLL. At C206 the chain carries Cysteine methyl ester. C206 carries the S-geranylgeranyl cysteine lipid modification. Residues 207-209 constitute a propeptide, removed in mature form; the sequence is VLL.

This sequence belongs to the small GTPase superfamily. Rho family. As to quaternary structure, interacts with BEM4; the interaction is direct. Interacts with SEC3; the interaction is direct. Interacts with the GAP BAG7. Interacts with the GAP LRG1. Interacts with the GAP SAC7. Interacts with the GAP RDI1. Interacts with the 1,3-beta-glucan synthase component FKS1. Interacts with the protein kinase PKC1. Interacts with the G protein beta subunit STE4. Interacts with SKN7. Interacts with TUS1. Interacts with BNI1.

It localises to the cell membrane. The protein resides in the endosome membrane. Its subcellular location is the peroxisome membrane. It catalyses the reaction GTP + H2O = GDP + phosphate + H(+). With respect to regulation, alternates between an inactive form bound to GDP and an active form bound to GTP. Activated by the guanine nucleotide-exchange factors (GEFs) ROM1, ROM2 and TUS1, and inactivated by GTPase-activating proteins (GAPs) BAG7, BEM2, LRG1, and SAC7, and the Rho GDP-dissociation inhibitor RDI1. The different GAPs regulate RHO1 in a target-specific manner. Acts as a central regulator in the cell wall integrity signaling pathway, which is regulated by the cell cycle and in response to various types of cell wall stress. Integrates signals from different cell surface sensors, and activates a set of effectors, regulating processes including beta-glucan synthesis at the site of wall remodeling, gene expression related to cell wall biogenesis, organization of the actin cytoskeleton, and protein- and secretory vesicle-targeting to the growth site. Activates the protein kinase C (PKC1) MAP kinase cascade, the beta-1,3-glucan synthase (FKS1), the formin BNI1, the exocyst component SEC3 and the transcription factor SKN7. This is GTP-binding protein RHO1 (RHO1) from Saccharomyces cerevisiae (strain ATCC 204508 / S288c) (Baker's yeast).